The primary structure comprises 357 residues: Glutamine synthetase (357 aa).

Positions 25 to 104 (VMAEYIWIDA…VLCETWDSDG (80 aa)) constitute a GS beta-grasp domain. One can recognise a GS catalytic domain in the interval 111–357 (YRHDCARLME…IIAETLCGGL (247 aa)).

It belongs to the glutamine synthetase family. Homooctamer.

It localises to the cytoplasm. It catalyses the reaction L-glutamate + NH4(+) + ATP = L-glutamine + ADP + phosphate + H(+). The polypeptide is Glutamine synthetase (glnA) (Emericella nidulans (strain FGSC A4 / ATCC 38163 / CBS 112.46 / NRRL 194 / M139) (Aspergillus nidulans)).